A 94-amino-acid chain; its full sequence is Integration host factor subunit beta (94 aa).

It belongs to the bacterial histone-like protein family. As to quaternary structure, heterodimer of an alpha and a beta chain.

Its function is as follows. This protein is one of the two subunits of integration host factor, a specific DNA-binding protein that functions in genetic recombination as well as in transcriptional and translational control. This is Integration host factor subunit beta (ihfB) from Serratia marcescens.